A 520-amino-acid chain; its full sequence is Cytochrome P450 monooxygenase oblB (520 aa).

A run of 3 helical transmembrane segments spans residues 17 to 37 (VAVISAGAFYLLNLVIYRLFL), 229 to 249 (LFMGLPWLIHVVRLIPVSILA), and 320 to 340 (IGTGTITTAGSLCFICYHIVV). Position 462 (Cys-462) interacts with heme.

The protein belongs to the cytochrome P450 family. Heme is required as a cofactor.

The protein localises to the membrane. The protein operates within secondary metabolite biosynthesis; terpenoid biosynthesis. Its function is as follows. Cytochrome P450 monooxygenase; part of the gene cluster that mediates the biosynthesis of the sesterterpenes ophiobolins, fungal phytotoxins with potential anti-cancer activities. The first step of the pathway is performed by the sesterterpene synthase oblA that possesses both prenyl transferase and terpene cyclase activity, converting isopentenyl diphosphate and dimethylallyl diphosphate into geranylfarnesyl diphosphate (GFPP) and further converting GFPP into ophiobolin F, respectively. Other sesterterpenoids (C(25) terpenoids) are found as minor products of oblA. It is expected that ophiobolin F is then oxidized to ophiobolin A via ophiobolin C and ophiobolin B intermediates by the combined action of the cytochrome P450 monooxygenase oblB and the FAD-dependent oxidoreductase oblC. Although oblB catalyzes multistep oxygenations at C5 and C21/C7 in a relatively efficient manner, it is unable to convert ophiobolin F to ophiobolin C and produces instead several unexpected derivatives. This is Cytochrome P450 monooxygenase oblB from Aspergillus clavatus (strain ATCC 1007 / CBS 513.65 / DSM 816 / NCTC 3887 / NRRL 1 / QM 1276 / 107).